A 1072-amino-acid polypeptide reads, in one-letter code: Dyslexia-associated protein KIAA0319 (1072 aa).

Residues 1 to 20 (MAPPTGVLSSLLLLVTIAGC) form the signal peptide. The 79-residue stretch at 21–99 (ARKQCSEGRT…PKKMGPIRSY (79 aa)) folds into the MANSC domain. The Extracellular portion of the chain corresponds to 21-955 (ARKQCSEGRT…WDGESNCEWS (935 aa)). Disordered regions lie at residues 168 to 277 (LQPS…SLPP) and 295 to 327 (VTPGSTEHSIPTPPTSAAPSESTPSELPISPTT). Asn-196, Asn-219, and Asn-262 each carry an N-linked (GlcNAc...) asparagine glycan. The span at 254–265 (SQLQEQSSNSSG) shows a compositional bias: polar residues. Over residues 311 to 320 (AAPSESTPSE) the composition is skewed to low complexity. PKD domains lie at 341–427 (DNLI…VKPA), 435–524 (VAVV…VNNA), 530–620 (VANA…VQPE), 621–714 (NNRP…VKKE), and 720–811 (RARA…VQPD). N-linked (GlcNAc...) asparagine glycans are attached at residues Asn-394, Asn-421, Asn-498, Asn-513, Asn-536, and Asn-551. Residue Asn-733 is glycosylated (N-linked (GlcNAc...) asparagine). A helical transmembrane segment spans residues 956–976 (IFYVTVLAFTLIVLTGGFTWL). At 977–1072 (CICCCKRQKR…ASFSYCSKDR (96 aa)) the chain is on the cytoplasmic side. An Endocytosis signal motif is present at residues 995-998 (YTIL). The interval 1045-1072 (KMERGNPKVSMNGSIRNGASFSYCSKDR) is disordered. Residues 1053–1072 (VSMNGSIRNGASFSYCSKDR) show a composition bias toward polar residues.

As to quaternary structure, homodimer. Interacts with AP2M1; required for clathrin-mediated endocytosis. Post-translationally, N-glycosylated. In terms of processing, O-glycosylated. Shedding of the extracellular domain and intramembrane cleavage produce several proteolytic products. The intramembrane cleavage releases a soluble cytoplasmic polypeptide that translocates to the nucleolus. As to expression, detected in adult brain cortex and fetal frontal lobe (at protein level). Highly expressed in brain cortex, putamen, amygdala, hippocampus and cerebellum.

Its subcellular location is the cell membrane. It is found in the early endosome membrane. Its function is as follows. Involved in neuronal migration during development of the cerebral neocortex. May function in a cell autonomous and a non-cell autonomous manner and play a role in appropriate adhesion between migrating neurons and radial glial fibers. May also regulate growth and differentiation of dendrites. The chain is Dyslexia-associated protein KIAA0319 (KIAA0319) from Homo sapiens (Human).